The sequence spans 304 residues: Sperm microtubule inner protein 6 (304 aa).

Belongs to the SPMIP6 family. Microtubule inner protein component of sperm flagellar doublet microtubules. Interacts with alpha-tubulin.

The protein resides in the cytoplasm. It is found in the cytoskeleton. It localises to the nucleus. The protein localises to the mitochondrion. Its subcellular location is the flagellum axoneme. In terms of biological role, may participate in intramanchette transport and midpiece formation of the sperm tail. May play a potential role in somatic cell proliferation. This Bos taurus (Bovine) protein is Sperm microtubule inner protein 6 (SPMIP6).